Reading from the N-terminus, the 399-residue chain is tRNA-specific 2-thiouridylase MnmA (399 aa).

ATP is bound by residues 7 to 14 and methionine 33; that span reads AMSGGVDS. The active-site Nucleophile is the cysteine 128. A disulfide bridge links cysteine 128 with cysteine 224. Glycine 152 is a binding site for ATP. The tract at residues 174–176 is interaction with tRNA; sequence KDQ. Residue cysteine 224 is the Cysteine persulfide intermediate of the active site. Positions 333 to 334 are interaction with tRNA; sequence RY.

It belongs to the MnmA/TRMU family.

It is found in the cytoplasm. It catalyses the reaction S-sulfanyl-L-cysteinyl-[protein] + uridine(34) in tRNA + AH2 + ATP = 2-thiouridine(34) in tRNA + L-cysteinyl-[protein] + A + AMP + diphosphate + H(+). In terms of biological role, catalyzes the 2-thiolation of uridine at the wobble position (U34) of tRNA, leading to the formation of s(2)U34. The polypeptide is tRNA-specific 2-thiouridylase MnmA (Rhodopirellula baltica (strain DSM 10527 / NCIMB 13988 / SH1)).